Here is a 282-residue protein sequence, read N- to C-terminus: Acetyl-coenzyme A carboxylase carboxyl transferase subunit beta (282 aa).

One can recognise a CoA carboxyltransferase N-terminal domain in the interval 29 to 282; sequence LMQRCPNCGL…LLKYGGMQDD (254 aa). Zn(2+)-binding residues include Cys33, Cys36, Cys51, and Cys54. A C4-type zinc finger spans residues 33–54; that stretch reads CPNCGLEFFARRLDKYKTCPDC.

It belongs to the AccD/PCCB family. As to quaternary structure, acetyl-CoA carboxylase is a heterohexamer composed of biotin carboxyl carrier protein (AccB), biotin carboxylase (AccC) and two subunits each of ACCase subunit alpha (AccA) and ACCase subunit beta (AccD). The cofactor is Zn(2+).

Its subcellular location is the cytoplasm. It carries out the reaction N(6)-carboxybiotinyl-L-lysyl-[protein] + acetyl-CoA = N(6)-biotinyl-L-lysyl-[protein] + malonyl-CoA. It functions in the pathway lipid metabolism; malonyl-CoA biosynthesis; malonyl-CoA from acetyl-CoA: step 1/1. Functionally, component of the acetyl coenzyme A carboxylase (ACC) complex. Biotin carboxylase (BC) catalyzes the carboxylation of biotin on its carrier protein (BCCP) and then the CO(2) group is transferred by the transcarboxylase to acetyl-CoA to form malonyl-CoA. The polypeptide is Acetyl-coenzyme A carboxylase carboxyl transferase subunit beta (Lactobacillus delbrueckii subsp. bulgaricus (strain ATCC BAA-365 / Lb-18)).